The chain runs to 363 residues: UDP-N-acetylglucosamine--N-acetylmuramyl-(pentapeptide) pyrophosphoryl-undecaprenol N-acetylglucosamine transferase (363 aa).

UDP-N-acetyl-alpha-D-glucosamine contacts are provided by residues 10 to 12 (TAG), Asn-124, Arg-161, Ser-195, and Gln-291.

The protein belongs to the glycosyltransferase 28 family. MurG subfamily.

The protein resides in the cell membrane. The catalysed reaction is di-trans,octa-cis-undecaprenyl diphospho-N-acetyl-alpha-D-muramoyl-L-alanyl-D-glutamyl-meso-2,6-diaminopimeloyl-D-alanyl-D-alanine + UDP-N-acetyl-alpha-D-glucosamine = di-trans,octa-cis-undecaprenyl diphospho-[N-acetyl-alpha-D-glucosaminyl-(1-&gt;4)]-N-acetyl-alpha-D-muramoyl-L-alanyl-D-glutamyl-meso-2,6-diaminopimeloyl-D-alanyl-D-alanine + UDP + H(+). It participates in cell wall biogenesis; peptidoglycan biosynthesis. Functionally, cell wall formation. Catalyzes the transfer of a GlcNAc subunit on undecaprenyl-pyrophosphoryl-MurNAc-pentapeptide (lipid intermediate I) to form undecaprenyl-pyrophosphoryl-MurNAc-(pentapeptide)GlcNAc (lipid intermediate II). This Streptomyces avermitilis (strain ATCC 31267 / DSM 46492 / JCM 5070 / NBRC 14893 / NCIMB 12804 / NRRL 8165 / MA-4680) protein is UDP-N-acetylglucosamine--N-acetylmuramyl-(pentapeptide) pyrophosphoryl-undecaprenol N-acetylglucosamine transferase.